A 119-amino-acid chain; its full sequence is Fluoride-specific ion channel FluC (119 aa).

3 helical membrane passes run 37–54 (LFAN…AETV), 61–83 (LLLI…ETVT), and 93–112 (ALSN…WLGL). Na(+)-binding residues include Gly-69 and Thr-72.

The protein belongs to the fluoride channel Fluc/FEX (TC 1.A.43) family.

It is found in the cell inner membrane. It catalyses the reaction fluoride(in) = fluoride(out). Na(+) is not transported, but it plays an essential structural role and its presence is essential for fluoride channel function. Its function is as follows. Fluoride-specific ion channel. Important for reducing fluoride concentration in the cell, thus reducing its toxicity. The polypeptide is Fluoride-specific ion channel FluC (Neisseria meningitidis serogroup C (strain 053442)).